The chain runs to 281 residues: Bifunctional protein FolD (281 aa).

NADP(+)-binding positions include 165-167 and S190; that span reads GRS.

Belongs to the tetrahydrofolate dehydrogenase/cyclohydrolase family. In terms of assembly, homodimer.

The enzyme catalyses (6R)-5,10-methylene-5,6,7,8-tetrahydrofolate + NADP(+) = (6R)-5,10-methenyltetrahydrofolate + NADPH. The catalysed reaction is (6R)-5,10-methenyltetrahydrofolate + H2O = (6R)-10-formyltetrahydrofolate + H(+). Its pathway is one-carbon metabolism; tetrahydrofolate interconversion. In terms of biological role, catalyzes the oxidation of 5,10-methylenetetrahydrofolate to 5,10-methenyltetrahydrofolate and then the hydrolysis of 5,10-methenyltetrahydrofolate to 10-formyltetrahydrofolate. The protein is Bifunctional protein FolD of Polaromonas naphthalenivorans (strain CJ2).